A 374-amino-acid polypeptide reads, in one-letter code: Peptide chain release factor 2 (374 aa).

Gln-254 is modified (N5-methylglutamine).

The protein belongs to the prokaryotic/mitochondrial release factor family. Post-translationally, methylated by PrmC. Methylation increases the termination efficiency of RF2.

The protein resides in the cytoplasm. Its function is as follows. Peptide chain release factor 2 directs the termination of translation in response to the peptide chain termination codons UGA and UAA. This is Peptide chain release factor 2 from Renibacterium salmoninarum (strain ATCC 33209 / DSM 20767 / JCM 11484 / NBRC 15589 / NCIMB 2235).